The sequence spans 644 residues: Adhesion G-protein coupled receptor F2 (644 aa).

The N-terminal stretch at 1-18 is a signal peptide; the sequence is MIPAHWLYCLMLLLPIES. Over 19-386 the chain is Extracellular; the sequence is CRILCQASSK…ESPVLTYITY (368 aa). N-linked (GlcNAc...) asparagine glycans are attached at residues Asn-155, Asn-219, Asn-293, and Asn-311. Residues 233-377 enclose the GAIN-B domain; the sequence is SRGSLGKNFT…SILMSPNTLE (145 aa). 2 cysteine pairs are disulfide-bonded: Cys-329–Cys-356 and Cys-344–Cys-358. The tract at residues 329–377 is GPS; the sequence is CVGWHSLESRWDWRACKTIQENSRQAVCRCRPNKLYTSFSILMSPNTLE. Residues 387–407 traverse the membrane as a helical segment; it reads IGLGISICSLIICLAIEVLVW. The Cytoplasmic segment spans residues 408–422; sequence SQVTKTEISYLRHLC. Residues 423 to 443 traverse the membrane as a helical segment; sequence IANIAATLLMADAWFIVASFL. The Extracellular segment spans residues 444–465; sequence SGPVLHHNGCVAATFFVHFFYL. A helical transmembrane segment spans residues 466–486; sequence SVFFWMLAKALLILYGILIVF. Residues 487–493 are Cytoplasmic-facing; that stretch reads HTLPKSC. The chain crosses the membrane as a helical span at residues 494-514; that stretch reads LVASLFSVGYGCPLVIAIITL. The Extracellular portion of the chain corresponds to 515–541; the sequence is AVTEPGKGYLRPEACWLNWDMTKALLA. The chain crosses the membrane as a helical span at residues 542-562; it reads FVVPALAIVVVNLITVTMVII. Over 563 to 585 the chain is Cytoplasmic; sequence KTQRAAIGSSMFQEVRAIVRICK. A helical membrane pass occupies residues 586–606; the sequence is NIAILTPLLGLTWGFGIATVI. The Extracellular portion of the chain corresponds to 607–610; sequence NGHS. Residues 611 to 631 traverse the membrane as a helical segment; sequence LAFHIIFSLLNALQVSPDAAV.

This sequence belongs to the G-protein coupled receptor 2 family. Adhesion G-protein coupled receptor (ADGR) subfamily. Mainly expressed in skin and heart, and very weakly in lung and spleen. Detected in all epidermal layers of skin.

It localises to the membrane. In terms of biological role, orphan receptor. The chain is Adhesion G-protein coupled receptor F2 (Adgrf2) from Mus musculus (Mouse).